A 138-amino-acid polypeptide reads, in one-letter code: Endoribonuclease YbeY (138 aa).

Zn(2+) contacts are provided by histidine 106, histidine 110, and aspartate 116.

Belongs to the endoribonuclease YbeY family. The cofactor is Zn(2+).

The protein resides in the cytoplasm. Single strand-specific metallo-endoribonuclease involved in late-stage 70S ribosome quality control and in maturation of the 3' terminus of the 16S rRNA. The sequence is that of Endoribonuclease YbeY from Phocaeicola vulgatus (strain ATCC 8482 / DSM 1447 / JCM 5826 / CCUG 4940 / NBRC 14291 / NCTC 11154) (Bacteroides vulgatus).